Reading from the N-terminus, the 92-residue chain is Small ribosomal subunit protein bS21 (92 aa).

The segment at 37–92 is disordered; it reads QREGTFREMKRRNHYEKPSEKKARQKAEAIRRARKLARKRAQREGLIAKRGGTTRR. Positions 51–67 are enriched in basic and acidic residues; sequence YEKPSEKKARQKAEAIR. Over residues 68–77 the composition is skewed to basic residues; the sequence is RARKLARKRA.

This sequence belongs to the bacterial ribosomal protein bS21 family.

In Maricaulis maris (strain MCS10) (Caulobacter maris), this protein is Small ribosomal subunit protein bS21.